The chain runs to 162 residues: NADH-ubiquinone oxidoreductase chain 6 (162 aa).

Transmembrane regions (helical) follow at residues 1–21 (MIFY…FYSL), 46–66 (FSFI…VVFV), 84–104 (EILV…DPLI), and 130–150 (GGYL…ALVL).

This sequence belongs to the complex I subunit 6 family.

The protein localises to the mitochondrion membrane. It catalyses the reaction a ubiquinone + NADH + 5 H(+)(in) = a ubiquinol + NAD(+) + 4 H(+)(out). Functionally, core subunit of the mitochondrial membrane respiratory chain NADH dehydrogenase (Complex I) that is believed to belong to the minimal assembly required for catalysis. Complex I functions in the transfer of electrons from NADH to the respiratory chain. The immediate electron acceptor for the enzyme is believed to be ubiquinone. The polypeptide is NADH-ubiquinone oxidoreductase chain 6 (ND6) (Patiria pectinifera (Starfish)).